The primary structure comprises 269 residues: MAGSVLENIQSVLQKTWVREFLAEFLSTYVLMVFGLGSVAHMVLGERLGSYLGVNLGFGFGVTMGIHVAGGISGAHMNAAVTFTNCALGRMAWKKFPIYVLGQFLGSFLAAATTYLIFYGAINHYAGGELLVTGPKSTANIFATYLPEHMTLWRGFVDEVFVTGMLQLCIFAITDKLNSPALQGTEPLMIGILVCVLGVSLGMNTGYAINPSRDLPPRFFTFIAGWGKKVFSAGNNWWWVPVVAPLLGAYLGGIVYLGLIHAGIPPQGS.

Over 1–20 (MAGSVLENIQSVLQKTWVRE) the chain is Cytoplasmic. Phosphoserine is present on S4. Residues 21-38 (FLAEFLSTYVLMVFGLGS) traverse the membrane as a helical segment. At 39 to 51 (VAHMVLGERLGSY) the chain is on the extracellular side. The chain crosses the membrane as a helical span at residues 52–69 (LGVNLGFGFGVTMGIHVA). The Cytoplasmic segment spans residues 70–73 (GGIS). The discontinuously helical intramembrane region spans 74 to 87 (GAHMNAAVTFTNCA). The NPA 1 signature appears at 78–80 (NAA). Residues 88-95 (LGRMAWKK) are Cytoplasmic-facing. A helical transmembrane segment spans residues 96 to 116 (FPIYVLGQFLGSFLAAATTYL). At 117-151 (IFYGAINHYAGGELLVTGPKSTANIFATYLPEHMT) the chain is on the extracellular side. A helical membrane pass occupies residues 152–172 (LWRGFVDEVFVTGMLQLCIFA). Over 173–184 (ITDKLNSPALQG) the chain is Cytoplasmic. A helical membrane pass occupies residues 185–201 (TEPLMIGILVCVLGVSL). At 202 to 205 (GMNT) the chain is on the extracellular side. The segment at residues 206-219 (GYAINPSRDLPPRF) is an intramembrane region (discontinuously helical). Residues 210–212 (NPS) carry the NPA 2 motif. Residues 220 to 237 (FTFIAGWGKKVFSAGNNW) lie on the Extracellular side of the membrane. A helical membrane pass occupies residues 238-259 (WWVPVVAPLLGAYLGGIVYLGL). The Cytoplasmic segment spans residues 260–269 (IHAGIPPQGS).

The protein belongs to the MIP/aquaporin (TC 1.A.8) family. In terms of assembly, homotetramer; each monomer provides an independent glycerol/water pore. Two homotetramers on opposing membranes can dimerize, forming a cell-cell junction. Interacts with PLIN1. Post-translationally, phosphorylation by PKA could prevent the interaction with PLIN1. In terms of tissue distribution, detected in heart, kidney and testis.

It is found in the cell membrane. It localises to the cytoplasmic vesicle membrane. The protein resides in the lipid droplet. It carries out the reaction glycerol(in) = glycerol(out). The catalysed reaction is H2O(in) = H2O(out). It catalyses the reaction urea(in) = urea(out). With respect to regulation, glycerol transport is regulated by pH, with the porin being permeable to glycerol at pH 7.4 but not at pH 5.5. Water permeability, however, is not influenced by pH. Not inhibited by mercury ions. Functionally, aquaglyceroporins form homotetrameric transmembrane channels, with each monomer independently mediating glycerol and water transport across the plasma membrane along their osmotic gradient. Could also be permeable to urea. Mediates the efflux of glycerol, formed upon triglyceride hydrolysis, to avoid its accumulation in adipocytes and to make it available to other tissues. In the kidney, mediates the reabsorption of glycerol, preventing its loss in urine, again participating to energy homeostasis. In pancreatic beta cells, it also mediates the efflux of glycerol, regulating its intracellular levels. The protein is Aquaporin-7 of Rattus norvegicus (Rat).